Reading from the N-terminus, the 350-residue chain is Protein-arginine kinase (350 aa).

Residues 21 to 253 (IVISSRIRLA…VRLADQEREA (233 aa)) form the Phosphagen kinase C-terminal domain. ATP contacts are provided by residues 24–28 (SSRIR), histidine 90, arginine 124, 175–179 (RASTM), and 206–211 (RGLYGE). Residues 336–341 (RDVHRA) carry the RDXXRA motif of the pArg binding pocket involved in allosteric regulation motif.

Belongs to the ATP:guanido phosphotransferase family.

It carries out the reaction L-arginyl-[protein] + ATP = N(omega)-phospho-L-arginyl-[protein] + ADP + H(+). Its activity is regulated as follows. Appears to be allosterically activated by the binding of pArg-containing polypeptides to the pArg-binding pocket localized in the C-terminal domain of McsB. Its function is as follows. Catalyzes the specific phosphorylation of arginine residues in proteins. The sequence is that of Protein-arginine kinase from Moorella thermoacetica (strain ATCC 39073 / JCM 9320).